A 591-amino-acid chain; its full sequence is MASKWIEEQPLVHRRDIRISSKSRIAAGLLVLLVLWRYGLPSSIHFGFSSEEPKQLGAVASEHALCSRYGADMLERGGNAADAMVATMFCIGVVGMYHSGIGGGGFMLIKSPDGDFEFVDFRETAPAAIVALGKNTSAGLRSGVPGEVRGLEYLHRKYGVLPWSVVLEPAIRTARDGFLVQEDLVNYIDMAVEETGEDFLSKHPSWAVDFSPSGSRVRLGDTMTRRRLAATLERISVDGPDAFYSGPIAEDMVASLRNVGGIMTLEDLANYTVVTRDTSHIDYRGYQITSTTAPSSGTIAMNILKVLDTYDEFFTPGTTELSTHRMIEAMKFAFGLRTRLGDPSFVHGMEEYENHILSAEMIDHIRQSISDSHTQDTSAYNPDGLEVVNSTGTAHIATVDHQGLAISATTTINRLFGNQIMCDRTGIIMNNEMDDFSVPTSSPPTFGHTPSSTNFAEPGKRPLSAISPAIILHPDGSLFLIAGSAGSNWITTTTVQNIISGIDQNLAAQEILATPRVHHQLIPNHAIFETTYDNGTVDFLSQLGHEVTWYPPAASMAHLIRVNADGGFDPAGDPRLKNSGGVVALQRRKFW.

The N-terminal stretch at 1-41 (MASKWIEEQPLVHRRDIRISSKSRIAAGLLVLLVLWRYGLP) is a signal peptide. Arginine 122 lines the L-glutamate pocket. N-linked (GlcNAc...) asparagine glycans are attached at residues asparagine 135, asparagine 270, and asparagine 389. Threonine 393 serves as the catalytic Nucleophile. Residues threonine 411, glutamate 432, and 464 to 465 (SA) each bind L-glutamate. An N-linked (GlcNAc...) asparagine glycan is attached at asparagine 534.

The protein belongs to the gamma-glutamyltransferase family.

It carries out the reaction an N-terminal (5-L-glutamyl)-[peptide] + an alpha-amino acid = 5-L-glutamyl amino acid + an N-terminal L-alpha-aminoacyl-[peptide]. It catalyses the reaction glutathione + H2O = L-cysteinylglycine + L-glutamate. The enzyme catalyses an S-substituted glutathione + H2O = an S-substituted L-cysteinylglycine + L-glutamate. It participates in mycotoxin biosynthesis. Functionally, gamma-glutamyltransferase; part of the gene cluster that mediates the biosynthesis of the secondary metabolite ustiloxin B, an antimitotic tetrapeptide. First, ustA is processed by the subtilisin-like endoprotease Kex2 that is outside the ustiloxin B gene cluster, at the C-terminal side of Arg-Lys, after transfer to Golgi apparatus through the endoplasmic reticulum (ER). Cleavage by KEX2 generates 16 peptides YAIG-I to YAIG-XVI. To process the precursor peptide further, at least two peptidases are necessary to cleave the N-terminal and C-terminal sides of the Tyr-Ala-Ile-Gly core peptide which serves as backbone for the synthesis of ustiloxin B, through cyclization and modification of the tyrosine with a non-protein coding amino acid, norvaline. One of the two peptidases must be the serine peptidase ustP; and the other pepdidase is probably ustH. Macrocyclization of the core peptide derived from ustA requires the tyrosinase ustQ, as well as the homologous oxidases ustYa and ustYb, and leads to the production of the first cyclization product N-desmethylustiloxin F. For the formation of N-desmethylustiloxin F, three oxidation steps are required, hydroxylation at the benzylic position, hydroxylation at either the aromatic ring of Tyr or beta-position of Ile, and oxidative cyclization. UstQ may catalyze the oxidation of a phenol moiety, whereas the ustYa and ustYb are most likely responsible for the remaining two-step oxidations. N-desmethylustiloxin F is then methylated by ustM to yield ustiloxin F which in turn substrate of the cytochrome P450 monooxygenase ustC which catalyzes the formation of S-deoxyustiloxin H. The flavoprotein monooxygenases ustF1 and ustF2 then participate in the modification of the side chain of S-deoxyustiloxin H, leading to the synthesis of an oxime intermediate, via ustiloxin H. Finally, carboxylative dehydration performed by the cysteine desulfurase-like protein ustD yields ustiloxin B. This chain is Glutathione hydrolase, found in Aspergillus flavus (strain ATCC 200026 / FGSC A1120 / IAM 13836 / NRRL 3357 / JCM 12722 / SRRC 167).